Consider the following 807-residue polypeptide: Putative histidine biosynthesis bifunctional protein HisCD (807 aa).

The tract at residues 1–440 (MTDHFDTLIR…ALNIAGQGVN (440 aa)) is histidinol dehydrogenase. Residues Gln261 and His264 each contribute to the Zn(2+) site. Catalysis depends on residues Glu328 and His329. Residues Asp362 and His421 each coordinate Zn(2+). The segment at 441–807 (MNNIFDANLL…VNEQPKEIAN (367 aa)) is histidinol-phosphate aminotransferase. Position 655 is an N6-(pyridoxal phosphate)lysine (Lys655).

This sequence in the N-terminal section; belongs to the histidinol dehydrogenase family. The protein in the C-terminal section; belongs to the class-II pyridoxal-phosphate-dependent aminotransferase family. Histidinol-phosphate aminotransferase subfamily. As to quaternary structure, homodimer. Zn(2+) is required as a cofactor. Pyridoxal 5'-phosphate serves as cofactor.

It catalyses the reaction L-histidinol phosphate + 2-oxoglutarate = 3-(imidazol-4-yl)-2-oxopropyl phosphate + L-glutamate. The enzyme catalyses L-histidinol + 2 NAD(+) + H2O = L-histidine + 2 NADH + 3 H(+). It participates in amino-acid biosynthesis; L-histidine biosynthesis; L-histidine from 5-phospho-alpha-D-ribose 1-diphosphate: step 7/9. Its pathway is amino-acid biosynthesis; L-histidine biosynthesis; L-histidine from 5-phospho-alpha-D-ribose 1-diphosphate: step 9/9. Its function is as follows. Catalyzes the sequential NAD-dependent oxidations of L-histidinol to L-histidinaldehyde and then to L-histidine. In Photorhabdus laumondii subsp. laumondii (strain DSM 15139 / CIP 105565 / TT01) (Photorhabdus luminescens subsp. laumondii), this protein is Putative histidine biosynthesis bifunctional protein HisCD (hisCD).